The chain runs to 113 residues: Venom protein 184 (113 aa).

The signal sequence occupies residues 1–21; the sequence is MKTTLIFCILGIVIPTAVVSS.

Contains 3 disulfide bonds. In terms of tissue distribution, expressed by the venom gland.

The protein localises to the secreted. The protein is Venom protein 184 of Lychas mucronatus (Chinese swimming scorpion).